The primary structure comprises 266 residues: Outer membrane protein OmpK (266 aa).

Positions 1–20 are cleaved as a signal peptide; the sequence is MRKSLLALSLLAATSAPVLA.

Belongs to the nucleoside-specific channel-forming outer membrane porin (Tsx) (TC 1.B.10) family.

It is found in the cell outer membrane. In terms of biological role, serves as receptor for a broad-host-range vibriophage, KVP40. This is Outer membrane protein OmpK (ompK) from Vibrio parahaemolyticus serotype O3:K6 (strain RIMD 2210633).